The sequence spans 550 residues: CTP synthase (550 aa).

The tract at residues 1-271 is amidoligase domain; sequence MTRYIFITGG…DAEVLDVFGM (271 aa). S13 contributes to the CTP binding site. S13 lines the UTP pocket. 14–19 is an ATP binding site; sequence SLGKGL. An L-glutamine-binding site is contributed by Y54. D71 serves as a coordination point for ATP. Mg(2+)-binding residues include D71 and E145. Residues 152–154, 192–197, and K228 contribute to the CTP site; these read DIE and KTKPTQ. UTP-binding positions include 192 to 197 and K228; that span reads KTKPTQ. A Glutamine amidotransferase type-1 domain is found at 297 to 549; sequence TIAVVGKYTV…IAAAKEQGRL (253 aa). Residue G361 coordinates L-glutamine. The Nucleophile; for glutamine hydrolysis role is filled by C388. L-glutamine is bound by residues 389–392, E412, and R477; that span reads FGMQ. Active-site residues include H522 and E524.

It belongs to the CTP synthase family. In terms of assembly, homotetramer.

It carries out the reaction UTP + L-glutamine + ATP + H2O = CTP + L-glutamate + ADP + phosphate + 2 H(+). It catalyses the reaction L-glutamine + H2O = L-glutamate + NH4(+). The catalysed reaction is UTP + NH4(+) + ATP = CTP + ADP + phosphate + 2 H(+). Its pathway is pyrimidine metabolism; CTP biosynthesis via de novo pathway; CTP from UDP: step 2/2. Allosterically activated by GTP, when glutamine is the substrate; GTP has no effect on the reaction when ammonia is the substrate. The allosteric effector GTP functions by stabilizing the protein conformation that binds the tetrahedral intermediate(s) formed during glutamine hydrolysis. Inhibited by the product CTP, via allosteric rather than competitive inhibition. Its function is as follows. Catalyzes the ATP-dependent amination of UTP to CTP with either L-glutamine or ammonia as the source of nitrogen. Regulates intracellular CTP levels through interactions with the four ribonucleotide triphosphates. This Caulobacter sp. (strain K31) protein is CTP synthase.